A 352-amino-acid polypeptide reads, in one-letter code: Threonine synthase (352 aa).

Residue lysine 59 is modified to N6-(pyridoxal phosphate)lysine. Pyridoxal 5'-phosphate-binding positions include asparagine 85, 185-189, and threonine 314; that span reads GNAGN.

The protein belongs to the threonine synthase family. It depends on pyridoxal 5'-phosphate as a cofactor.

The enzyme catalyses O-phospho-L-homoserine + H2O = L-threonine + phosphate. The protein operates within amino-acid biosynthesis; L-threonine biosynthesis; L-threonine from L-aspartate: step 5/5. Its function is as follows. Catalyzes the gamma-elimination of phosphate from L-phosphohomoserine and the beta-addition of water to produce L-threonine. The sequence is that of Threonine synthase (thrC) from Bacillus subtilis (strain 168).